Reading from the N-terminus, the 315-residue chain is Probable cell division protein WhiA (315 aa).

A DNA-binding region (H-T-H motif) is located at residues 277-311 (SLQELGAMMPSGQISKSGVNHRLRKLNQIAEGYQQ).

This sequence belongs to the WhiA family.

Functionally, involved in cell division and chromosome segregation. This chain is Probable cell division protein WhiA, found in Lacticaseibacillus casei (strain BL23) (Lactobacillus casei).